The following is a 203-amino-acid chain: Twist-related protein 1 (203 aa).

Over residues 1–18 (MMQDVSSSPVSPADDSLS) the composition is skewed to low complexity. The tract at residues 1–105 (MMQDVSSSPV…SGGGSPQSYE (105 aa)) is disordered. Residues 34-43 (RGGRKRRSSR) show a composition bias toward basic residues. Gly residues-rich tracts occupy residues 46–65 (AGGG…GGDE) and 80–100 (GCGG…GGGS). The region spanning 109–160 (TQRVMANVRGRQRTQSLNEAFAALRKIIPTLPSDKLSKIQTLKLAARYIDFL) is the bHLH domain. Positions 162–192 (QVLQSDELDSKMASCSYVAHERLSYAFSVWR) are sufficient for transactivation activity.

In terms of assembly, efficient DNA binding requires dimerization with another bHLH protein. Homodimer or heterodimer with E proteins such as TCF3. ID1 binds preferentially to TCF3 but does not interact efficiently with TWIST1 so ID1 levels control the amount of TCF3 available to dimerize with TWIST and thus determine the type of dimer formed.

Its subcellular location is the nucleus. In terms of biological role, acts as a transcriptional regulator. Inhibits myogenesis by sequestrating E proteins, inhibiting trans-activation by MEF2, and inhibiting DNA-binding by MYOD1 through physical interaction. This interaction probably involves the basic domains of both proteins. Also represses expression of pro-inflammatory cytokines such as TNFA and IL1B. Regulates cranial suture patterning and fusion. Activates transcription as a heterodimer with E proteins. Regulates gene expression differentially, depending on dimer composition. Homodimers induce expression of FGFR2 and POSTN while heterodimers repress FGFR2 and POSTN expression and induce THBS1 expression. Heterodimerization is also required for osteoblast differentiation. Represses the activity of the circadian transcriptional activator: NPAS2-BMAL1 heterodimer. The chain is Twist-related protein 1 (TWIST1) from Callithrix jacchus (White-tufted-ear marmoset).